Consider the following 296-residue polypeptide: Carboxylesterase YbfK (296 aa).

Catalysis depends on charge relay system residues serine 129, glutamate 244, and histidine 273.

This sequence belongs to the AB hydrolase superfamily.

The protein localises to the cytoplasm. It catalyses the reaction a carboxylic ester + H2O = an alcohol + a carboxylate + H(+). Shows carboxylesterase activity in vitro. The chain is Carboxylesterase YbfK (ybfK) from Bacillus subtilis (strain 168).